Consider the following 396-residue polypeptide: Acetate kinase (396 aa).

N8 lines the Mg(2+) pocket. Residue K15 participates in ATP binding. R89 is a substrate binding site. Catalysis depends on D146, which acts as the Proton donor/acceptor. ATP is bound by residues 206 to 210, 281 to 283, and 329 to 333; these read HLGNG, DLR, and GIGEN. E382 is a Mg(2+) binding site.

The protein belongs to the acetokinase family. In terms of assembly, homodimer. Mg(2+) is required as a cofactor. Requires Mn(2+) as cofactor.

It is found in the cytoplasm. It carries out the reaction acetate + ATP = acetyl phosphate + ADP. It participates in metabolic intermediate biosynthesis; acetyl-CoA biosynthesis; acetyl-CoA from acetate: step 1/2. Its function is as follows. Catalyzes the formation of acetyl phosphate from acetate and ATP. Can also catalyze the reverse reaction. The sequence is that of Acetate kinase from Geobacillus kaustophilus (strain HTA426).